We begin with the raw amino-acid sequence, 163 residues long: Crossover junction endodeoxyribonuclease RuvC (163 aa).

Residues Asp9, Glu76, and Asp148 contribute to the active site. Asp9, Glu76, and Asp148 together coordinate Mg(2+).

This sequence belongs to the RuvC family. In terms of assembly, homodimer which binds Holliday junction (HJ) DNA. The HJ becomes 2-fold symmetrical on binding to RuvC with unstacked arms; it has a different conformation from HJ DNA in complex with RuvA. In the full resolvosome a probable DNA-RuvA(4)-RuvB(12)-RuvC(2) complex forms which resolves the HJ. Requires Mg(2+) as cofactor.

It is found in the cytoplasm. The enzyme catalyses Endonucleolytic cleavage at a junction such as a reciprocal single-stranded crossover between two homologous DNA duplexes (Holliday junction).. In terms of biological role, the RuvA-RuvB-RuvC complex processes Holliday junction (HJ) DNA during genetic recombination and DNA repair. Endonuclease that resolves HJ intermediates. Cleaves cruciform DNA by making single-stranded nicks across the HJ at symmetrical positions within the homologous arms, yielding a 5'-phosphate and a 3'-hydroxyl group; requires a central core of homology in the junction. The consensus cleavage sequence is 5'-(A/T)TT(C/G)-3'. Cleavage occurs on the 3'-side of the TT dinucleotide at the point of strand exchange. HJ branch migration catalyzed by RuvA-RuvB allows RuvC to scan DNA until it finds its consensus sequence, where it cleaves and resolves the cruciform DNA. This Nostoc punctiforme (strain ATCC 29133 / PCC 73102) protein is Crossover junction endodeoxyribonuclease RuvC.